The sequence spans 262 residues: Thiazole synthase (262 aa).

The Schiff-base intermediate with DXP role is filled by K105. Residues G166, 192 to 193, and 214 to 215 each bind 1-deoxy-D-xylulose 5-phosphate; these read AG and NT.

It belongs to the ThiG family. Homotetramer. Forms heterodimers with either ThiH or ThiS.

It localises to the cytoplasm. The enzyme catalyses [ThiS sulfur-carrier protein]-C-terminal-Gly-aminoethanethioate + 2-iminoacetate + 1-deoxy-D-xylulose 5-phosphate = [ThiS sulfur-carrier protein]-C-terminal Gly-Gly + 2-[(2R,5Z)-2-carboxy-4-methylthiazol-5(2H)-ylidene]ethyl phosphate + 2 H2O + H(+). It functions in the pathway cofactor biosynthesis; thiamine diphosphate biosynthesis. In terms of biological role, catalyzes the rearrangement of 1-deoxy-D-xylulose 5-phosphate (DXP) to produce the thiazole phosphate moiety of thiamine. Sulfur is provided by the thiocarboxylate moiety of the carrier protein ThiS. In vitro, sulfur can be provided by H(2)S. The sequence is that of Thiazole synthase from Phenylobacterium zucineum (strain HLK1).